The following is a 374-amino-acid chain: Fe(2+) transport protein 1 (374 aa).

The N-terminal stretch at 1–33 (MATPRTLVPILPPVAALLLLLVAASSIPILAAA) is a signal peptide. The Extracellular segment spans residues 34–62 (QPADACGGAPDQAAADGACHDVPRALRLK). A helical transmembrane segment spans residues 63-83 (LIAIPTILVSSVVGVCLPLLS). Residues 84 to 92 (RSVPALRPD) are Cytoplasmic-facing. Residues 93-113 (GGLFAVVKAFASGVILATGYM) traverse the membrane as a helical segment. At 114–137 (HVLPDAFNNLTSPCLPRKPWSEFP) the chain is on the extracellular side. The helical transmembrane segment at 138–158 (FAAFVAMLAAVSTLMADSLML) threads the bilayer. The Cytoplasmic portion of the chain corresponds to 159–219 (TYYNRSKPRP…ATQVQLRRNR (61 aa)). Positions 166–199 (PRPSSGGDVAAVADHGESPDQGHRHGHGHGHGHG) are disordered. Basic and acidic residues predominate over residues 179–188 (DHGESPDQGH). Residues 220-240 (VVVQVLEIGIVVHSVVIGLGM) traverse the membrane as a helical segment. Over 241 to 251 (GASQNVCTIRP) the chain is Extracellular. The chain crosses the membrane as a helical span at residues 252-272 (LVAAMCFHQMFEGMGLGGCIL). Topologically, residues 273–282 (QAEYGRRMRS) are cytoplasmic. The helical transmembrane segment at 283–303 (VLVFFFSTTTPFGIALGLALT) threads the bilayer. Topologically, residues 304–313 (RVYRDNSPTA) are extracellular. Residues 314 to 334 (LIVVGLLNAASAGLLHYMALV) traverse the membrane as a helical segment. Topologically, residues 335–353 (ELLAADFMGPKLQGNVRLQ) are cytoplasmic. The chain crosses the membrane as a helical span at residues 354–374 (LAAFLAVLLGAGGMSVMAKWA).

The protein belongs to the ZIP transporter (TC 2.A.5) family. As to expression, expressed in companion cells in the upper region of the root.

Its subcellular location is the cell membrane. Iron transporter involved in the uptake of iron from the rhizosphere across the plasma membrane in the root epidermal layer. May also transport other divalent cations. This chain is Fe(2+) transport protein 1 (IRT1), found in Oryza sativa subsp. japonica (Rice).